Consider the following 190-residue polypeptide: Mediator of RNA polymerase II transcription subunit 28 (190 aa).

Residues 76 to 108 (MLIKDENQDLSIEIQRKEALLQKHYNRLEEWKA) are a coiled coil.

It belongs to the Mediator complex subunit 28 family. In terms of assembly, component of the Mediator complex.

It is found in the nucleus. Component of the Mediator complex, a coactivator involved in the regulated transcription of nearly all RNA polymerase II-dependent genes. Mediator functions as a bridge to convey information from gene-specific regulatory proteins to the basal RNA polymerase II transcription machinery. Mediator is recruited to promoters by direct interactions with regulatory proteins and serves as a scaffold for the assembly of a functional preinitiation complex with RNA polymerase II and the general transcription factors. This Drosophila pseudoobscura pseudoobscura (Fruit fly) protein is Mediator of RNA polymerase II transcription subunit 28 (MED28).